We begin with the raw amino-acid sequence, 161 residues long: Regulator of ribonuclease activity A (161 aa).

Belongs to the RraA family. In terms of assembly, homotrimer. Binds to both RNA-binding sites in the C-terminal region of Rne and to RhlB.

Its subcellular location is the cytoplasm. Globally modulates RNA abundance by binding to RNase E (Rne) and regulating its endonucleolytic activity. Can modulate Rne action in a substrate-dependent manner by altering the composition of the degradosome. Modulates RNA-binding and helicase activities of the degradosome. This Escherichia fergusonii (strain ATCC 35469 / DSM 13698 / CCUG 18766 / IAM 14443 / JCM 21226 / LMG 7866 / NBRC 102419 / NCTC 12128 / CDC 0568-73) protein is Regulator of ribonuclease activity A.